Reading from the N-terminus, the 590-residue chain is L-gulonolactone oxidase 5 (590 aa).

The signal sequence occupies residues 1 to 31; it reads MAFGYSPSYCSFWRTLLGLYCLFTLVHTVIS. Residues 60–242 form the FAD-binding PCMH-type domain; the sequence is STCRAANVAY…SQVTFELQPM (183 aa).

Belongs to the oxygen-dependent FAD-linked oxidoreductase family. Requires FAD as cofactor.

It carries out the reaction L-gulono-1,4-lactone + O2 = L-ascorbate + H2O2 + H(+). The protein operates within cofactor biosynthesis; L-ascorbate biosynthesis. Catalyzes the oxidation of L-gulono-1,4-lactone to ascorbic acid. L-gulono-1,4-lactone is oxidized to hydrogen peroxide and L-xylo-hexulonolactone which spontaneously isomerizes to L-ascorbate. The polypeptide is L-gulonolactone oxidase 5 (Arabidopsis thaliana (Mouse-ear cress)).